The following is a 161-amino-acid chain: Prs ADP-ribosylating toxin (161 aa).

Belongs to the MbcT/ParT/Res family. As to quaternary structure, homodimer, forms heterotetrameric ParS(2)-ParT(2) complexes. Consumes NAD(+) and auto-ADP-ribosylates on the tryptic fragment Ala-47-Arg-66 in vitro. Also auto-ADP-ribosylates using NADP(+).

Toxic component of a type II toxin-antitoxin (TA) system. Expression in E.coli inhibits cell growth; bacteriostasis is neutralized by expression of cognate antitoxin ParS. ADP-ribosylates E.coli ribose-phosphate pyrophosphokinase (RPPK, prs) using NAD(+) in vitro; ADP-ribosylates RPPK on 'Lys-182' and 'Ser-202'. Cannot use NADP(+). Also auto-ADP-ribosylates in vitro; in the presence of RPPK auto-ADP-ribosylation decreases. The protein is Prs ADP-ribosylating toxin of Sphingobium sp. (strain YBL2).